The primary structure comprises 637 residues: Chaperone protein HtpG (637 aa).

Positions 1–330 (MATAPASHAF…TEDLPLNISR (330 aa)) are a; substrate-binding. Residues 331-551 (ETLQENVVVR…GGASTSSMDR (221 aa)) are b. The interval 552–637 (LLRVLHKDES…GDWYKAVRGL (86 aa)) is c.

This sequence belongs to the heat shock protein 90 family. As to quaternary structure, homodimer.

Its subcellular location is the cytoplasm. Its function is as follows. Molecular chaperone. Has ATPase activity. This chain is Chaperone protein HtpG, found in Nitratidesulfovibrio vulgaris (strain ATCC 29579 / DSM 644 / CCUG 34227 / NCIMB 8303 / VKM B-1760 / Hildenborough) (Desulfovibrio vulgaris).